The primary structure comprises 251 residues: Ubiquinone/menaquinone biosynthesis C-methyltransferase UbiE (251 aa).

S-adenosyl-L-methionine contacts are provided by residues threonine 74, aspartate 95, 123 to 124 (NA), and serine 140.

This sequence belongs to the class I-like SAM-binding methyltransferase superfamily. MenG/UbiE family.

It carries out the reaction a 2-demethylmenaquinol + S-adenosyl-L-methionine = a menaquinol + S-adenosyl-L-homocysteine + H(+). The enzyme catalyses a 2-methoxy-6-(all-trans-polyprenyl)benzene-1,4-diol + S-adenosyl-L-methionine = a 5-methoxy-2-methyl-3-(all-trans-polyprenyl)benzene-1,4-diol + S-adenosyl-L-homocysteine + H(+). It functions in the pathway quinol/quinone metabolism; menaquinone biosynthesis; menaquinol from 1,4-dihydroxy-2-naphthoate: step 2/2. Its pathway is cofactor biosynthesis; ubiquinone biosynthesis. Functionally, methyltransferase required for the conversion of demethylmenaquinol (DMKH2) to menaquinol (MKH2) and the conversion of 2-polyprenyl-6-methoxy-1,4-benzoquinol (DDMQH2) to 2-polyprenyl-3-methyl-6-methoxy-1,4-benzoquinol (DMQH2). The polypeptide is Ubiquinone/menaquinone biosynthesis C-methyltransferase UbiE (Escherichia fergusonii (strain ATCC 35469 / DSM 13698 / CCUG 18766 / IAM 14443 / JCM 21226 / LMG 7866 / NBRC 102419 / NCTC 12128 / CDC 0568-73)).